The chain runs to 32 residues: Dermaseptin-8 (32 aa).

A Glutamine amide modification is found at Q32.

As to expression, expressed by the skin glands.

It localises to the secreted. Antimicrobial peptide, active against the Gram-positive bacterium S.aureus, and the Gram-negative bacteriun E.coli. Has hemolytic activity at 432 uM. The polypeptide is Dermaseptin-8 (Phyllomedusa tarsius (Brownbelly leaf frog)).